The primary structure comprises 355 residues: Guanine nucleotide-binding protein G(i) subunit alpha-2 (355 aa).

Residue Gly2 is the site of N-myristoyl glycine attachment. A lipid anchor (S-palmitoyl cysteine) is attached at Cys3. Residues 32-355 (REVKLLLLGA…KNNLKDCGLF (324 aa)) enclose the G-alpha domain. The interval 35 to 48 (KLLLLGAGESGKST) is G1 motif. Residues 40-47 (GAGESGKS), 176-182 (LRTRVKT), 201-205 (DVGGQ), 270-273 (NKKD), and Ala327 contribute to the GTP site. Residue Ser47 coordinates Mg(2+). A G2 motif region spans residues 174–182 (DVLRTRVKT). At Arg179 the chain carries ADP-ribosylarginine; by cholera toxin. Mg(2+) is bound at residue Thr182. Residues 197-206 (FKMFDVGGQR) are G3 motif. A Deamidated glutamine; by Photorhabdus PAU_02230 modification is found at Gln205. The interval 266–273 (ILFLNKKD) is G4 motif. Residues 325 to 330 (TCATDT) are G5 motif. Cys352 is modified (ADP-ribosylcysteine; by pertussis toxin).

The protein belongs to the G-alpha family. G(i/o/t/z) subfamily. As to quaternary structure, g proteins are composed of 3 units; alpha, beta and gamma. The alpha chain contains the guanine nucleotide binding site. In this context, interacts with GNB2. Interacts with GPSM1. Interacts with RGS12 and RGS14. Interacts with UNC5B. Interacts (inactive GDP-bound form) with NUCB1 (via GBA motif); the interaction leads to activation of GNAI3. Interacts (inactive GDP-bound form) with CCDC88C/DAPLE (via GBA motif). Interacts (inactive GDP-bound form) with CCDC8A/GIV (via GBA motif). Interacts with CXCR1 and CXCR2. Post-translationally, (Microbial infection) Deamidated at Gln-205 by Photorhabdus asymbiotica toxin PAU_02230, blocking GTP hydrolysis of heterotrimeric GNAQ or GNA11 and G-alphai (GNAI1, GNAI2 or GNAI3) proteins, thereby activating RhoA.

Its subcellular location is the cytoplasm. It localises to the cytoskeleton. It is found in the microtubule organizing center. The protein localises to the centrosome. The protein resides in the cell membrane. Its subcellular location is the membrane. Guanine nucleotide-binding proteins (G proteins) are involved as modulators or transducers in various transmembrane signaling systems. The G(i) proteins are involved in hormonal regulation of adenylate cyclase: they inhibit the cyclase in response to beta-adrenergic stimuli. May play a role in cell division. Functionally, regulates the cell surface density of dopamine receptors DRD2 by sequestrating them as an intracellular pool. This chain is Guanine nucleotide-binding protein G(i) subunit alpha-2 (GNAI2), found in Homo sapiens (Human).